Here is a 562-residue protein sequence, read N- to C-terminus: Arginine--tRNA ligase (562 aa).

The 'HIGH' region motif lies at 129 to 139 (ANPTGPLHVGH).

It belongs to the class-I aminoacyl-tRNA synthetase family. In terms of assembly, monomer.

The protein resides in the cytoplasm. It catalyses the reaction tRNA(Arg) + L-arginine + ATP = L-arginyl-tRNA(Arg) + AMP + diphosphate. This is Arginine--tRNA ligase (argS) from Xylella fastidiosa (strain 9a5c).